The following is a 459-amino-acid chain: Ribulose bisphosphate carboxylase large chain (459 aa).

Residues 1–2 constitute a propeptide that is removed on maturation; the sequence is MS. The residue at position 3 (P3) is an N-acetylproline. K14 carries the post-translational modification N6,N6,N6-trimethyllysine. Residues N123 and T173 each coordinate substrate. Catalysis depends on K175, which acts as the Proton acceptor. Substrate is bound at residue K177. 3 residues coordinate Mg(2+): K201, D203, and E204. K201 carries the post-translational modification N6-carboxylysine. H294 functions as the Proton acceptor in the catalytic mechanism. R295, H327, and S379 together coordinate substrate.

The protein belongs to the RuBisCO large chain family. Type I subfamily. As to quaternary structure, heterohexadecamer of 8 large chains and 8 small chains; disulfide-linked. The disulfide link is formed within the large subunit homodimers. Mg(2+) is required as a cofactor. The disulfide bond which can form in the large chain dimeric partners within the hexadecamer appears to be associated with oxidative stress and protein turnover.

The protein localises to the plastid. It localises to the chloroplast. It catalyses the reaction 2 (2R)-3-phosphoglycerate + 2 H(+) = D-ribulose 1,5-bisphosphate + CO2 + H2O. It carries out the reaction D-ribulose 1,5-bisphosphate + O2 = 2-phosphoglycolate + (2R)-3-phosphoglycerate + 2 H(+). In terms of biological role, ruBisCO catalyzes two reactions: the carboxylation of D-ribulose 1,5-bisphosphate, the primary event in carbon dioxide fixation, as well as the oxidative fragmentation of the pentose substrate in the photorespiration process. Both reactions occur simultaneously and in competition at the same active site. This chain is Ribulose bisphosphate carboxylase large chain, found in Streptopus lanceolatus (Rose twisted stalk).